The following is an 85-amino-acid chain: UPF0386 protein Meso_1721 (85 aa).

Belongs to the UPF0386 family.

In Chelativorans sp. (strain BNC1), this protein is UPF0386 protein Meso_1721.